The following is a 324-amino-acid chain: Endochitinase B (324 aa).

A signal peptide spans 1–23; the sequence is MRLREFTALSSLLFSLLLLSASA. A Chitin-binding type-1 domain is found at 24 to 65; it reads EQCGSQAGGARCASGLCCSKFGWCGNTNDYCGPGNCQSQCPG. 4 disulfides stabilise this stretch: C26–C41, C35–C47, C40–C54, and C59–C63. A 4-hydroxyproline mark is found at P67 and P69. 3 disulfides stabilise this stretch: C96-C158, C170-C178, and C277-C309. Catalysis depends on E140, which acts as the Proton donor. Positions 318 to 324 are cleaved as a propeptide — removed in mature form; it reads GLLVDTM.

This sequence belongs to the glycosyl hydrolase 19 family. Chitinase class I subfamily. Post-translationally, the 4-hydroxyproline residues are not glycosylated in this plant vacuolar protein.

It is found in the vacuole. The catalysed reaction is Random endo-hydrolysis of N-acetyl-beta-D-glucosaminide (1-&gt;4)-beta-linkages in chitin and chitodextrins.. Functionally, defense against chitin-containing fungal pathogens. The polypeptide is Endochitinase B (CHN50) (Nicotiana tabacum (Common tobacco)).